The sequence spans 239 residues: mRNA turnover protein 4 homolog (239 aa).

The segment at Gln-216–Ser-239 is disordered. Residues Asp-221–Ser-239 are compositionally biased toward acidic residues. 3 positions are modified to phosphoserine: Ser-225, Ser-229, and Ser-233.

Belongs to the universal ribosomal protein uL10 family. Associates with the pre-60S ribosomal particle. Interacts with MINAS-60 (product of an alternative open reading frame of RBM10).

The protein resides in the nucleus. The protein localises to the nucleolus. Its subcellular location is the cytoplasm. In terms of biological role, component of the ribosome assembly machinery. Nuclear paralog of the ribosomal protein P0, it binds pre-60S subunits at an early stage of assembly in the nucleolus, and is replaced by P0 in cytoplasmic pre-60S subunits and mature 80S ribosomes. The protein is mRNA turnover protein 4 homolog (MRTO4) of Bos taurus (Bovine).